A 252-amino-acid polypeptide reads, in one-letter code: Triosephosphate isomerase (252 aa).

Residue 9-11 participates in substrate binding; the sequence is NWK. H96 acts as the Electrophile in catalysis. Residue E166 is the Proton acceptor of the active site. Substrate contacts are provided by residues G172, S212, and 233-234; that span reads GG.

This sequence belongs to the triosephosphate isomerase family. As to quaternary structure, homodimer.

It localises to the cytoplasm. The catalysed reaction is D-glyceraldehyde 3-phosphate = dihydroxyacetone phosphate. The protein operates within carbohydrate biosynthesis; gluconeogenesis. Its pathway is carbohydrate degradation; glycolysis; D-glyceraldehyde 3-phosphate from glycerone phosphate: step 1/1. In terms of biological role, involved in the gluconeogenesis. Catalyzes stereospecifically the conversion of dihydroxyacetone phosphate (DHAP) to D-glyceraldehyde-3-phosphate (G3P). The chain is Triosephosphate isomerase from Chlorobium chlorochromatii (strain CaD3).